The primary structure comprises 120 residues: uncharacterized protein (120 aa).

This is an uncharacterized protein from Methanocaldococcus jannaschii (strain ATCC 43067 / DSM 2661 / JAL-1 / JCM 10045 / NBRC 100440) (Methanococcus jannaschii).